The primary structure comprises 83 residues: MVTIRLARGGSKKRPFYHLTVTNSRNARDGRFVERVGFFNPIASGAEVKLSVNQERVTYWLSQGAQPSERVAQLLKEAAKAAA.

Belongs to the bacterial ribosomal protein bS16 family.

The sequence is that of Small ribosomal subunit protein bS16 from Pseudomonas entomophila (strain L48).